We begin with the raw amino-acid sequence, 227 residues long: Neuromodulin (227 aa).

Positions 1-227 (MLCCMRRTKQ…EDPEADQEHA (227 aa)) are disordered. S-palmitoyl cysteine attachment occurs at residues cysteine 3 and cysteine 4. Basic and acidic residues predominate over residues 9–32 (KQVEKNDEDQKIEQDGVKPEDKAH). The 30-residue stretch at 31–60 (AHKAATKIQASFRGHITRKKLKGEKKGDAP) folds into the IQ domain. Serine 41 is subject to Phosphoserine; by PHK. Over residues 54–84 (EKKGDAPAAEAEAKEKDDAPVADGVEKKEGD) the composition is skewed to basic and acidic residues. A compositionally biased stretch (low complexity) spans 85–97 (GSATTDAAPATSP). Phosphoserine occurs at positions 86 and 96. Basic and acidic residues predominate over residues 98 to 127 (KAEEPSKAGDAPSEEKKGEGDAAPSEEKAG). The segment covering 128–139 (SAETESAAKATT) has biased composition (low complexity). Threonine 138 is subject to Phosphothreonine. Phosphoserine is present on residues serine 142, serine 144, and serine 145. Over residues 146 to 158 (KAEDGPAKEEPKQ) the composition is skewed to basic and acidic residues. A compositionally biased stretch (low complexity) spans 159 to 193 (ADVPAAVTDAAATTPAAEDAATKAAQPPTETAESS). A Phosphothreonine modification is found at threonine 172. A phosphoserine; by CK2 mark is found at serine 192 and serine 193. The segment covering 202–215 (VDEAKPKESARQDE) has biased composition (basic and acidic residues). Residues 216-227 (GKEDPEADQEHA) show a composition bias toward acidic residues.

The protein belongs to the neuromodulin family. As to quaternary structure, identified in a complex containing FGFR4, NCAM1, CDH2, PLCG1, FRS2, SRC, SHC1, GAP43 and CTTN. Interacts (via IQ domain) with calmodulin. Binds calmodulin with a greater affinity in the absence of Ca(2+) than in its presence. In terms of processing, phosphorylated. Phosphorylation of this protein by a protein kinase C is specifically correlated with certain forms of synaptic plasticity. Post-translationally, palmitoylated by ZDHHC3. Palmitoylation is regulated by ARF6 and is essential for plasma membrane association and axonal and dendritic filopodia induction. Deacylated by LYPLA2. In terms of tissue distribution, expressed in the hippocampus (at protein level). Expressed in the dorsal root ganglion and the spinal cord (at protein level).

It localises to the cell membrane. Its subcellular location is the cell projection. It is found in the growth cone membrane. The protein localises to the synapse. The protein resides in the filopodium membrane. It localises to the perikaryon. Its subcellular location is the dendrite. It is found in the axon. The protein localises to the cytoplasm. Functionally, this protein is associated with nerve growth. It is a major component of the motile 'growth cones' that form the tips of elongating axons. Plays a role in axonal and dendritic filopodia induction. The chain is Neuromodulin (Gap43) from Mus musculus (Mouse).